A 193-amino-acid chain; its full sequence is Ion-translocating oxidoreductase complex subunit A (193 aa).

6 consecutive transmembrane segments (helical) span residues 5–25, 39–59, 62–82, 102–122, 134–154, and 171–191; these read LLLF…FLGL, IGMG…AWMV, FILL…LVIA, LLGI…VALL, AVYG…FAAI, and SIAL…TGLV.

It belongs to the NqrDE/RnfAE family. In terms of assembly, the complex is composed of six subunits: RnfA, RnfB, RnfC, RnfD, RnfE and RnfG.

Its subcellular location is the cell inner membrane. Its function is as follows. Part of a membrane-bound complex that couples electron transfer with translocation of ions across the membrane. In Yersinia enterocolitica serotype O:8 / biotype 1B (strain NCTC 13174 / 8081), this protein is Ion-translocating oxidoreductase complex subunit A.